Here is a 360-residue protein sequence, read N- to C-terminus: Magnesium transporter NIPA2 (360 aa).

Topologically, residues 1–9 are extracellular; that stretch reads MSQGHGKYD. The chain crosses the membrane as a helical span at residues 10 to 30; it reads FYIGLGLAMSSSIFIGGSFIL. At 31–56 the chain is on the cytoplasmic side; sequence KKKGLLRLARKGSTRAGQGGHAYLKE. The helical transmembrane segment at 57 to 77 threads the bilayer; the sequence is WLWWAGLLSMGAGEVANFAAY. A topological domain (extracellular) is located at residue alanine 78. Residues 79-99 form a helical membrane-spanning segment; that stretch reads FAPATLVTPLGALSVLVSAIL. Over 100–107 the chain is Cytoplasmic; it reads SSYFLNER. The helical transmembrane segment at 108-128 threads the bilayer; sequence LNLHGKIGCLLSILGSTVMVI. Topologically, residues 129–149 are extracellular; it reads HAPKEEEIETLNEMSHKLGDP. Residues 150–170 form a helical membrane-spanning segment; sequence GFVVFATLVVIVSLILIFVVG. Residues 171–175 are Cytoplasmic-facing; the sequence is PRHGQ. The chain crosses the membrane as a helical span at residues 176–196; it reads TNILVYITICSVIGAVSVSCA. Over 197–215 the chain is Extracellular; that stretch reads KGLGIAIKELFAGKPVLQH. The chain crosses the membrane as a helical span at residues 216–236; sequence PLTWILLLSLIVCVSTQINYL. Residues 237–246 lie on the Cytoplasmic side of the membrane; sequence NRALDIFNTS. Residues 247–267 form a helical membrane-spanning segment; that stretch reads IVTPIYYVFFTTSVITCSAIL. At 268–278 the chain is on the extracellular side; it reads FKEWQDMPVDD. A helical membrane pass occupies residues 279–299; sequence VIGTLSGFFTIIVGIFLLHAF. The Cytoplasmic portion of the chain corresponds to 300-360; that stretch reads KDVSFSLSSL…SRRNGNLTAF (61 aa).

This sequence belongs to the NIPA family.

It localises to the cell membrane. The protein localises to the early endosome. It carries out the reaction Mg(2+)(in) = Mg(2+)(out). Acts as a selective Mg(2+) transporter. The chain is Magnesium transporter NIPA2 (NIPA2) from Bos taurus (Bovine).